Reading from the N-terminus, the 389-residue chain is Cytochrome b (389 aa).

4 consecutive transmembrane segments (helical) span residues 32–52, 76–98, 113–133, and 179–199; these read FGSL…FLAM, WLIR…LHIA, TWTI…LGYT, and FFSL…MHMI. Residues His-82 and His-96 each contribute to the heme b site. 2 residues coordinate heme b: His-183 and His-197. His-202 contacts a ubiquinone. 4 helical membrane-spanning segments follow: residues 225–245, 289–309, 321–341, and 348–368; these read YLIK…IIIF, LFGV…PLLD, IGKL…FIGA, and YVAI…FFIP.

The protein belongs to the cytochrome b family. As to quaternary structure, fungal cytochrome b-c1 complex contains 10 subunits; 3 respiratory subunits, 2 core proteins and 5 low-molecular weight proteins. Cytochrome b-c1 complex is a homodimer. It depends on heme b as a cofactor.

It localises to the mitochondrion inner membrane. In terms of biological role, component of the ubiquinol-cytochrome c reductase complex (complex III or cytochrome b-c1 complex) that is part of the mitochondrial respiratory chain. The b-c1 complex mediates electron transfer from ubiquinol to cytochrome c. Contributes to the generation of a proton gradient across the mitochondrial membrane that is then used for ATP synthesis. The protein is Cytochrome b (cob) of Schizosaccharomyces japonicus (Fission yeast).